The primary structure comprises 586 residues: Dolichyl-diphosphooligosaccharide--protein glycosyltransferase subunit 1 (586 aa).

A signal peptide spans 1-15 (MRLLFAIALLGAVFA). Residues 16 to 421 (EDAWKAANVD…EFEFVDMLRE (406 aa)) lie on the Lumenal side of the membrane. A helical membrane pass occupies residues 422–442 (PLLASAFFFSLFFVIIVYSRF). The Cytoplasmic segment spans residues 443–586 (DFTISSDPAK…NRADSVLASI (144 aa)).

Belongs to the OST1 family. In terms of assembly, component of the oligosaccharyltransferase (OST) complex.

It is found in the endoplasmic reticulum membrane. The protein resides in the cytoplasmic granule. It participates in protein modification; protein glycosylation. Subunit of the oligosaccharyl transferase (OST) complex that catalyzes the initial transfer of a defined glycan (Glc(3)Man(9)GlcNAc(2) in eukaryotes) from the lipid carrier dolichol-pyrophosphate to an asparagine residue within an Asn-X-Ser/Thr consensus motif in nascent polypeptide chains, the first step in protein N-glycosylation. N-glycosylation occurs cotranslationally and the complex associates with the Sec61 complex at the channel-forming translocon complex that mediates protein translocation across the endoplasmic reticulum (ER). All subunits are required for a maximal enzyme activity. The polypeptide is Dolichyl-diphosphooligosaccharide--protein glycosyltransferase subunit 1 (Caenorhabditis elegans).